Reading from the N-terminus, the 420-residue chain is Transmembrane protease serine 11B-like protein (420 aa).

At 1 to 19 (MTVSKLRPVIASRKSFPPW) the chain is on the cytoplasmic side. Residues 20–40 (MIILGVLGVLAILGLIIGLLV) form a helical; Signal-anchor for type II membrane protein membrane-spanning segment. The Extracellular segment spans residues 41-420 (HFLAVENKIY…RDWIASKTGI (380 aa)). Residues 48–165 (KIYYYQGSFK…GSLKLTEITK (118 aa)) form the SEA domain. 2 N-linked (GlcNAc...) asparagine glycosylation sites follow: N111 and N146. A Peptidase S1 domain is found at 189–419 (ITGGSTAQKG…YRDWIASKTG (231 aa)). C214 and C230 form a disulfide bridge. H229 serves as the catalytic Charge relay system. A glycan (N-linked (GlcNAc...) asparagine) is linked at N239. D274 functions as the Charge relay system in the catalytic mechanism. 2 disulfide bridges follow: C339–C355 and C366–C395. The active-site Charge relay system is the S370.

The protein belongs to the peptidase S1 family.

The protein localises to the membrane. The protein resides in the cell membrane. Its activity is regulated as follows. Inhibited by aprotinin, leupeptin, benzamidine, SERPINA1, SPINT1 and SPINT2. Functionally, serine protease. The protein is Transmembrane protease serine 11B-like protein (Tmprss11bnl) of Rattus norvegicus (Rat).